We begin with the raw amino-acid sequence, 615 residues long: Leucine aminopeptidase 2 (615 aa).

Residues 139–141 (QCQ) and 271–276 (PYGGME) each bind a peptide. H300 provides a ligand contact to Zn(2+). E301 (proton acceptor) is an active-site residue. 2 residues coordinate Zn(2+): H304 and E323. The Proton donor role is filled by Y386.

The protein belongs to the peptidase M1 family. It depends on Zn(2+) as a cofactor.

The protein localises to the cytoplasm. It is found in the nucleus. It carries out the reaction an epoxide + H2O = an ethanediol. Aminopeptidase that preferentially cleaves di- and tripeptides. Also has low epoxide hydrolase activity (in vitro). Can hydrolyze the epoxide leukotriene LTA(4) but it forms preferentially 5,6-dihydroxy-7,9,11,14-eicosatetraenoic acid rather than the cytokine leukotriene B(4) as the product compared to the homologous mammalian enzyme (in vitro). In Aspergillus oryzae (strain ATCC 42149 / RIB 40) (Yellow koji mold), this protein is Leucine aminopeptidase 2.